The chain runs to 218 residues: Eukaryotic translation initiation factor 3 subunit K (218 aa).

Residues 42–204 (YDLEANLAVL…NIKPKNIVEK (163 aa)) enclose the PCI domain.

The protein belongs to the eIF-3 subunit K family. As to quaternary structure, component of the eukaryotic translation initiation factor 3 (eIF-3) complex, which is composed of 13 subunits: eif3a, eif3b, eif3c, eif3d, eif3e, eif3f, eif3g, eif3h, eif3i, eif3j, eif3k, eif3l and eif3m.

It is found in the nucleus. The protein localises to the cytoplasm. Its function is as follows. Component of the eukaryotic translation initiation factor 3 (eIF-3) complex, which is involved in protein synthesis of a specialized repertoire of mRNAs and, together with other initiation factors, stimulates binding of mRNA and methionyl-tRNAi to the 40S ribosome. The eIF-3 complex specifically targets and initiates translation of a subset of mRNAs involved in cell proliferation. The protein is Eukaryotic translation initiation factor 3 subunit K (eif3k) of Xenopus tropicalis (Western clawed frog).